The sequence spans 1481 residues: Cystic fibrosis transmembrane conductance regulator (1481 aa).

At 1–77 the chain is on the cytoplasmic side; that stretch reads MQRSPLEKAS…KLINALRRCF (77 aa). A helical membrane pass occupies residues 78-98; it reads FWRFMFYGIILYLGEVTKAVQ. One can recognise an ABC transmembrane type-1 1 domain in the interval 81–365; that stretch reads FMFYGIILYL…WAVQTWYDSL (285 aa). Over 99–122 the chain is Extracellular; it reads PLLLGRIIASYDPDNKVERSIAIY. The chain crosses the membrane as a helical span at residues 123–146; that stretch reads LGIGLCLLFIVRTLLLHPAIFGLH. Over 147–195 the chain is Cytoplasmic; the sequence is HIGMQMRIAMFSLIYKKTLKLSSRVLDKISIGQLVSLLSNNLNKFDEGL. The helical transmembrane segment at 196–216 threads the bilayer; the sequence is ALAHFVWIAPLQVTLLMGLLW. At 217 to 222 the chain is on the extracellular side; it reads DLLQAF. The helical transmembrane segment at 223–243 threads the bilayer; that stretch reads TFCGLAFLVVLALLQAGLGKM. The Cytoplasmic segment spans residues 244–298; sequence MMKYRDQRAGKINERLVITSEMIENIQSVKAYCWEEAMEKIIENLRQTELKLTRK. A helical transmembrane segment spans residues 299 to 319; the sequence is AAYVRYLNSSAFFFSGFFVVF. Over 320 to 339 the chain is Extracellular; sequence LSVLPYALLKGIILRKIFTT. The chain crosses the membrane as a helical span at residues 340–358; it reads ISFCIVLRMAVTRQFPWAV. Residues 359 to 858 are Cytoplasmic-facing; it reads QTWYDSLGAI…YLRYITVHKS (500 aa). ATP contacts are provided by residues Trp401, 457 to 464, and Gln492; that span reads GSTGAGKT. An ABC transporter 1 domain is found at 421 to 645; the sequence is ISNCDTSLFF…RPDFSSKLMG (225 aa). Residue Cys523 is the site of S-palmitoyl cysteine attachment. A phosphoserine mark is found at Ser548 and Ser659. The interval 653-831 is disordered R region; sequence TAERRNSIIT…EEINEEDLRD (179 aa). Residue Ser669 is modified to Phosphoserine; by PKA. Ser685 is subject to Phosphoserine. Lys687 is covalently cross-linked (Glycyl lysine isopeptide (Lys-Gly) (interchain with G-Cter in ubiquitin)). A phosphoserine mark is found at Ser699 and Ser711. Phosphothreonine is present on Thr716. Phosphoserine occurs at positions 736, 767, 790, 795, and 813. The chain crosses the membrane as a helical span at residues 859–879; sequence LMFVLIWCLVVFLVEVAASLV. The 297-residue stretch at 859–1155 folds into the ABC transmembrane type-1 2 domain; sequence LMFVLIWCLV…AVNSSIDVDS (297 aa). The Extracellular portion of the chain corresponds to 880-918; the sequence is VLCLFPKILLQDKGNSTKNASNSYAVIITSTSSYYIFYI. 2 N-linked (GlcNAc...) asparagine glycosylation sites follow: Asn894 and Asn898. The chain crosses the membrane as a discontinuously helical span at residues 919–939; the sequence is YVGVADTLLALGLFRGLPLVH. Over 940-990 the chain is Cytoplasmic; that stretch reads TLITVSKTLHHKMLQSVLQAPMSTLNTLKTGGILNRFSKDIAVLDDLLPLT. The chain crosses the membrane as a helical span at residues 991 to 1011; the sequence is IFDFIQLLLIVIGAVVVVSVL. Residues 1012-1013 lie on the Extracellular side of the membrane; that stretch reads QP. The chain crosses the membrane as a helical span at residues 1014–1034; that stretch reads YIFLATVPVIAAFILLRGYFL. Over 1035–1095 the chain is Cytoplasmic; that stretch reads HTSQQLKQLE…TANWFLYLST (61 aa). The helical transmembrane segment at 1096 to 1116 threads the bilayer; that stretch reads LRWFQMRIEMIFVIFFIAVTF. Residues 1117–1130 lie on the Extracellular side of the membrane; the sequence is ISILTTGEGEGRVG. Residues 1131-1151 form a helical membrane-spanning segment; the sequence is IILTLAMNIMGTLQWAVNSSI. Residues 1152–1481 lie on the Cytoplasmic side of the membrane; sequence DVDSLMRSVS…TEEEVQETKL (330 aa). An ABC transporter 2 domain is found at 1211–1444; the sequence is MTVKDLTAKY…KSLFRQAISP (234 aa). ATP contacts are provided by residues Tyr1220 and 1245–1252; that span reads GRTGSGKS. The segment at 1387-1481 is interaction with GORASP2; sequence RTLKQAFADC…TEEEVQETKL (95 aa). Cys1396 carries S-palmitoyl cysteine lipidation. A Phosphoserine modification is found at Ser1457. A PDZ-binding motif is present at residues 1479–1481; it reads TKL.

It belongs to the ABC transporter superfamily. ABCC family. CFTR transporter (TC 3.A.1.202) subfamily. As to quaternary structure, monomer; does not require oligomerization for channel activity. May form oligomers in the membrane. Interacts with SLC26A3, SLC26A6 and NHERF1. Interacts with SHANK2. Interacts with MYO6. Interacts (via C-terminus) with GOPC (via PDZ domain); this promotes CFTR internalization and thereby decreases channel activity. Interacts with SLC4A7 through NHERF1. Found in a complex with MYO5B and RAB11A. Interacts with ANO1. Interacts with SLC26A8. Interacts with AHCYL1; the interaction increases CFTR activity. Interacts with CSE1L. The core-glycosylated form interacts with GORASP2 (via PDZ GRASP-type 1 domain) in respone to ER stress. Interacts with MARCHF2; the interaction leads to CFTR ubiqtuitination and degradation. Interacts with ADGRG2. In terms of processing, N-glycosylated. Post-translationally, phosphorylated; cAMP treatment promotes phosphorylation and activates the channel. Dephosphorylation decreases the ATPase activity (in vitro). Phosphorylation at PKA sites activates the channel. Phosphorylation at PKC sites enhances the response to phosphorylation by PKA. Phosphorylated by AMPK; this inhibits channel activity. Ubiquitinated, leading to its degradation in the lysosome. Deubiquitination by USP10 in early endosomes enhances its endocytic recycling to the cell membrane. Ubiquitinated by RNF185 during ER stress. Ubiquitinated by MARCHF2.

Its subcellular location is the apical cell membrane. The protein resides in the early endosome membrane. It localises to the cell membrane. The protein localises to the recycling endosome membrane. It is found in the endoplasmic reticulum membrane. Its subcellular location is the nucleus. The enzyme catalyses ATP + H2O + closed Cl(-) channel = ADP + phosphate + open Cl(-) channel.. The catalysed reaction is chloride(in) = chloride(out). It carries out the reaction hydrogencarbonate(in) = hydrogencarbonate(out). It catalyses the reaction ATP + H2O = ADP + phosphate + H(+). Its function is as follows. Epithelial ion channel that plays an important role in the regulation of epithelial ion and water transport and fluid homeostasis. Mediates the transport of chloride ions across the cell membrane. Possesses an intrinsic ATPase activity and utilizes ATP to gate its channel; the passive flow of anions through the channel is gated by cycles of ATP binding and hydrolysis by the ATP-binding domains. The ion channel is also permeable to HCO(3)(-); selectivity depends on the extracellular chloride concentration. Exerts its function also by modulating the activity of other ion channels and transporters. Contributes to the regulation of the pH and the ion content of the epithelial fluid layer. Modulates the activity of the epithelial sodium channel (ENaC) complex, in part by regulating the cell surface expression of the ENaC complex. May regulate bicarbonate secretion and salvage in epithelial cells by regulating the transporter SLC4A7. Can inhibit the chloride channel activity of ANO1. Plays a role in the chloride and bicarbonate homeostasis during sperm epididymal maturation and capacitation. This chain is Cystic fibrosis transmembrane conductance regulator, found in Ovis aries (Sheep).